The sequence spans 84 residues: U4-theraphotoxin-Hhn1a (84 aa).

Positions 1–22 (MKVTLIAILTCAAVLVLHTTAA) are cleaved as a signal peptide. Residues 23-47 (EELEESQLMEVGMPDTELAAVDEER) constitute a propeptide that is removed on maturation. 3 disulfides stabilise this stretch: Cys51-Cys65, Cys55-Cys76, and Cys70-Cys81.

This sequence belongs to the neurotoxin 12 (Hwtx-2) family. 02 (Hwtx-2) subfamily. As to expression, expressed by the venom gland.

The protein resides in the secreted. Postsynaptic neurotoxin. The protein is U4-theraphotoxin-Hhn1a of Cyriopagopus hainanus (Chinese bird spider).